The sequence spans 525 residues: GMP synthase [glutamine-hydrolyzing] (525 aa).

Residues 8–206 enclose the Glutamine amidotransferase type-1 domain; that stretch reads PLLILDFGSQ…VVDICKASTD (199 aa). Cys-85 acts as the Nucleophile in catalysis. Active-site residues include His-180 and Glu-182. In terms of domain architecture, GMPS ATP-PPase spans 207–400; it reads WTPEHIIDEA…LGLPHDMVYR (194 aa). Residue 234 to 240 coordinates ATP; that stretch reads SGGVDSS.

As to quaternary structure, homodimer.

The catalysed reaction is XMP + L-glutamine + ATP + H2O = GMP + L-glutamate + AMP + diphosphate + 2 H(+). It participates in purine metabolism; GMP biosynthesis; GMP from XMP (L-Gln route): step 1/1. In terms of biological role, catalyzes the synthesis of GMP from XMP. In Legionella pneumophila subsp. pneumophila (strain Philadelphia 1 / ATCC 33152 / DSM 7513), this protein is GMP synthase [glutamine-hydrolyzing].